The primary structure comprises 433 residues: PHO85 cyclin-10 (433 aa).

The span at 1–10 shows a compositional bias: basic and acidic residues; the sequence is MDMTKNHTTD. Disordered regions lie at residues 1-20 and 51-81; these read MDMTKNHTTDTEEFDDGDIR and LTSEWDQSRSNTPGLAEGKTEKAQPCGTTDS. Residues 51-63 are compositionally biased toward polar residues; the sequence is LTSEWDQSRSNTP.

Belongs to the cyclin family. PHO80 subfamily. Forms a cyclin-CDK complex with PHO85. Interacts with GSY2, independent of the presence of PHO85.

The protein resides in the cytoplasm. Cyclin partner of the cyclin-dependent kinase (CDK) PHO85. Together with cyclin PCL8, negatively controls glycogen accumulation under favorable growth conditions. The PCL10-PHO85 cyclin-CDK holoenzyme has glycogen synthase kinase activity and phosphorylates and negatively regulates glycogen synthase GSY2. Also has minor GLC8 kinase activity. This Saccharomyces cerevisiae (strain ATCC 204508 / S288c) (Baker's yeast) protein is PHO85 cyclin-10 (PCL10).